Here is a 134-residue protein sequence, read N- to C-terminus: Global transcriptional regulator Spx (134 aa).

An intrachain disulfide couples Cys10 to Cys13.

This sequence belongs to the ArsC family. Spx subfamily. In terms of assembly, interacts with the C-terminal domain of the alpha subunit of the RNAP.

It localises to the cytoplasm. Its function is as follows. Global transcriptional regulator that plays a key role in stress response and exerts either positive or negative regulation of genes. Acts by interacting with the C-terminal domain of the alpha subunit of the RNA polymerase (RNAP). This interaction can enhance binding of RNAP to the promoter region of target genes and stimulate their transcription, or block interaction of RNAP with activator. This is Global transcriptional regulator Spx from Streptococcus pyogenes serotype M1.